The sequence spans 412 residues: Peptidase T (412 aa).

Histidine 81 serves as a coordination point for Zn(2+). Aspartate 83 is an active-site residue. Aspartate 144 contributes to the Zn(2+) binding site. Glutamate 178 acts as the Proton acceptor in catalysis. The Zn(2+) site is built by glutamate 179, aspartate 201, and histidine 383.

This sequence belongs to the peptidase M20B family. Zn(2+) serves as cofactor.

Its subcellular location is the cytoplasm. It carries out the reaction Release of the N-terminal residue from a tripeptide.. Functionally, cleaves the N-terminal amino acid of tripeptides. This is Peptidase T from Bacillus cereus (strain Q1).